The following is a 203-amino-acid chain: FMN-dependent NADH:quinone oxidoreductase (203 aa).

Residues S9, 15–17 (SVS), and 138–141 (SRGG) each bind FMN.

It belongs to the azoreductase type 1 family. Homodimer. FMN serves as cofactor.

It catalyses the reaction 2 a quinone + NADH + H(+) = 2 a 1,4-benzosemiquinone + NAD(+). It carries out the reaction N,N-dimethyl-1,4-phenylenediamine + anthranilate + 2 NAD(+) = 2-(4-dimethylaminophenyl)diazenylbenzoate + 2 NADH + 2 H(+). Quinone reductase that provides resistance to thiol-specific stress caused by electrophilic quinones. Its function is as follows. Also exhibits azoreductase activity. Catalyzes the reductive cleavage of the azo bond in aromatic azo compounds to the corresponding amines. The protein is FMN-dependent NADH:quinone oxidoreductase of Methylorubrum populi (strain ATCC BAA-705 / NCIMB 13946 / BJ001) (Methylobacterium populi).